Reading from the N-terminus, the 148-residue chain is uncharacterized protein (148 aa).

The protein belongs to the serpin family. Poxviruses subfamily.

This is an uncharacterized protein from Fowlpox virus (strain NVSL) (FPV).